The sequence spans 105 residues: Small ribosomal subunit protein uS10 (105 aa).

Belongs to the universal ribosomal protein uS10 family. In terms of assembly, part of the 30S ribosomal subunit.

Involved in the binding of tRNA to the ribosomes. In Synechococcus sp. (strain JA-3-3Ab) (Cyanobacteria bacterium Yellowstone A-Prime), this protein is Small ribosomal subunit protein uS10.